A 152-amino-acid polypeptide reads, in one-letter code: Cell division protein SepF (152 aa).

The protein belongs to the SepF family. Homodimer. Interacts with FtsZ.

It is found in the cytoplasm. Cell division protein that is part of the divisome complex and is recruited early to the Z-ring. Probably stimulates Z-ring formation, perhaps through the cross-linking of FtsZ protofilaments. Its function overlaps with FtsA. The polypeptide is Cell division protein SepF (Clostridioides difficile (strain 630) (Peptoclostridium difficile)).